The chain runs to 20 residues: Brevinin-1DYa (20 aa).

Cysteine 14 and cysteine 20 are oxidised to a cystine.

As to expression, expressed by the skin glands.

It is found in the secreted. Functionally, antimicrobial peptide. Has low activity against the Gram-positive bacterium S.aureus and the Gram-negative bacterium E.coli (MIC&lt;15 uM). Has a strong hemolytic activity. The polypeptide is Brevinin-1DYa (Rana dybowskii (Dybovsky's frog)).